The chain runs to 176 residues: Ribosome maturation factor RimM (176 aa).

In terms of domain architecture, PRC barrel spans lysine 102–tryptophan 175.

Belongs to the RimM family. Binds ribosomal protein uS19.

The protein resides in the cytoplasm. An accessory protein needed during the final step in the assembly of 30S ribosomal subunit, possibly for assembly of the head region. Essential for efficient processing of 16S rRNA. May be needed both before and after RbfA during the maturation of 16S rRNA. It has affinity for free ribosomal 30S subunits but not for 70S ribosomes. This chain is Ribosome maturation factor RimM, found in Buchnera aphidicola subsp. Acyrthosiphon pisum (strain APS) (Acyrthosiphon pisum symbiotic bacterium).